A 288-amino-acid chain; its full sequence is Formamidopyrimidine-DNA glycosylase (288 aa).

The active-site Schiff-base intermediate with DNA is the proline 2. The active-site Proton donor is the glutamate 3. The active-site Proton donor; for beta-elimination activity is lysine 58. DNA is bound by residues histidine 101, arginine 124, and arginine 169. The FPG-type zinc-finger motif lies at 254–288 (LVYDRAGLPCRVCGTPIRQIVQGQRSTFYCPACQR). The active-site Proton donor; for delta-elimination activity is arginine 278.

Belongs to the FPG family. Monomer. The cofactor is Zn(2+).

It catalyses the reaction Hydrolysis of DNA containing ring-opened 7-methylguanine residues, releasing 2,6-diamino-4-hydroxy-5-(N-methyl)formamidopyrimidine.. It carries out the reaction 2'-deoxyribonucleotide-(2'-deoxyribose 5'-phosphate)-2'-deoxyribonucleotide-DNA = a 3'-end 2'-deoxyribonucleotide-(2,3-dehydro-2,3-deoxyribose 5'-phosphate)-DNA + a 5'-end 5'-phospho-2'-deoxyribonucleoside-DNA + H(+). Its function is as follows. Involved in base excision repair of DNA damaged by oxidation or by mutagenic agents. Acts as a DNA glycosylase that recognizes and removes damaged bases. Has a preference for oxidized purines, such as 7,8-dihydro-8-oxoguanine (8-oxoG). Has AP (apurinic/apyrimidinic) lyase activity and introduces nicks in the DNA strand. Cleaves the DNA backbone by beta-delta elimination to generate a single-strand break at the site of the removed base with both 3'- and 5'-phosphates. The chain is Formamidopyrimidine-DNA glycosylase from Ralstonia nicotianae (strain ATCC BAA-1114 / GMI1000) (Ralstonia solanacearum).